A 332-amino-acid chain; its full sequence is Formamidase (332 aa).

The CN hydrolase domain occupies 14-259; that stretch reads FLTALIQYPV…WEIVTAEVYP (246 aa). The active-site Proton acceptor is the glutamate 60. The active-site Proton donor is the lysine 132. The active-site Nucleophile is cysteine 165.

This sequence belongs to the carbon-nitrogen hydrolase superfamily. Aliphatic amidase family.

It carries out the reaction formamide + H2O = formate + NH4(+). In terms of biological role, is an aliphatic amidase with a restricted substrate specificity, as it only hydrolyzes formamide. The chain is Formamidase from Bacillus thuringiensis (strain Al Hakam).